Here is a 157-residue protein sequence, read N- to C-terminus: SsrA-binding protein (157 aa).

Belongs to the SmpB family.

The protein resides in the cytoplasm. In terms of biological role, required for rescue of stalled ribosomes mediated by trans-translation. Binds to transfer-messenger RNA (tmRNA), required for stable association of tmRNA with ribosomes. tmRNA and SmpB together mimic tRNA shape, replacing the anticodon stem-loop with SmpB. tmRNA is encoded by the ssrA gene; the 2 termini fold to resemble tRNA(Ala) and it encodes a 'tag peptide', a short internal open reading frame. During trans-translation Ala-aminoacylated tmRNA acts like a tRNA, entering the A-site of stalled ribosomes, displacing the stalled mRNA. The ribosome then switches to translate the ORF on the tmRNA; the nascent peptide is terminated with the 'tag peptide' encoded by the tmRNA and targeted for degradation. The ribosome is freed to recommence translation, which seems to be the essential function of trans-translation. The polypeptide is SsrA-binding protein (Chlorobaculum tepidum (strain ATCC 49652 / DSM 12025 / NBRC 103806 / TLS) (Chlorobium tepidum)).